We begin with the raw amino-acid sequence, 440 residues long: Chitinase-like protein Idgf5 (440 aa).

A signal peptide spans 1–27; it reads MRNKMIYFNFHLFVIIFANLQIFQVQA. A GH18 domain is found at 28–439; the sequence is ANIFCYYDTQ…KSIHNAFKKF (412 aa). The cysteines at positions 32 and 56 are disulfide-linked. 3 N-linked (GlcNAc...) asparagine glycosylation sites follow: Asn126, Asn283, and Asn403. A disulfide bond links Cys340 and Cys421.

It belongs to the glycosyl hydrolase 18 family. IDGF subfamily. In terms of processing, glycosylated.

The protein localises to the secreted. Cooperates with insulin-like peptides to stimulate the proliferation, polarization and motility of imaginal disk cells. May act by stabilizing the binding of insulin-like peptides to its receptor through a simultaneous interaction with both molecules to form a multiprotein signaling complex. This chain is Chitinase-like protein Idgf5 (Idgf5), found in Glossina morsitans morsitans (Savannah tsetse fly).